The chain runs to 81 residues: Cytotoxin 8 (81 aa).

The signal sequence occupies residues 1–21 (MKTLLLTLVVVTIVCLDLGYT). 4 disulfides stabilise this stretch: Cys-24-Cys-42, Cys-35-Cys-59, Cys-63-Cys-74, and Cys-75-Cys-80.

Belongs to the three-finger toxin family. Short-chain subfamily. Type IA cytotoxin sub-subfamily. Monomer in solution; Homodimer and oligomer in the presence of negatively charged lipids forming a pore with a size ranging between 20 and 30 Angstroms. As to expression, expressed by the venom gland.

Its subcellular location is the secreted. The protein localises to the target cell membrane. Its function is as follows. Shows cytolytic activity on many different cells by forming pore in lipid membranes. In vivo, increases heart rate or kills the animal by cardiac arrest. In addition, it binds to heparin with high affinity, interacts with Kv channel-interacting protein 1 (KCNIP1) in a calcium-independent manner, and binds to integrin alpha-V/beta-3 (ITGAV/ITGB3) with moderate affinity. The polypeptide is Cytotoxin 8 (Naja atra (Chinese cobra)).